The following is an 822-amino-acid chain: MKPALLPWALLLLATALGPGPGPTADAQESCSMRCGALDGPCSCHPTCSGLGTCCLDFRDFCLEILPYSGSMMGGKDFVVRHFKMSSPTDASVICRFKDSIQTLGHVDSSGQVHCVSPLLYESGRIPFTVSLDNGHSFPRAGTWLAVHPNKVSMMEKSELVNETRWQYYGTANTSGNLSLTWHVKSLPTQTITIELWGYEETGMPYSQEWTAKWSYLYPLATHIPNSGSFTFTPKPAPPSYQRWRVGALRIIDSKNYAGQKDVQALWTNDHALAWHLSDDFREDPVAWARTQCQAWEELEDQLPNFLEELPDCPCTLTQARADSGRFFTDYGCDMEQGSVCTYHPGAVHCVRSVQASLRYGSGQQCCYTADGTQLLTADSSGGSTPDRGHDWGAPPFRTPPRVPSMSHWLYDVLSFYYCCLWAPDCPRYMQRRPSNDCRNYRPPRLASAFGDPHFVTFDGTNFTFNGRGEYVLLEAALTDLRVQARAQPGTMSNGTETRGTGLTAVAVQEGNSDVVEVRLANRTGGLEVLLNQEVLSFTEQSWMDLKGMFLSVAAGDRVSIMLASGAGLEVSVQGPFLSVSVLLPEKFLTHTHGLLGTLNNDPTDDFTLHSGRVLPPGTSPQELFLFGANWTVHNASSLLTYDSWFLVHNFLYQPKHDPTFEPLFPSETTLNPSLAQEAAKLCGDDHFCNFDVAATGSLSTGTATRVAHQLHQRRMQSLQPVVSCGWLAPPPNGQKEGNRYLAGSTIYFHCDNGYSLAGAETSTCQADGTWSSPTPKCQPGRSYAVLLGIIFGGLAVVAAVALVYVLLRRRKGNTHVWGAQP.

The signal sequence occupies residues 1–27 (MKPALLPWALLLLATALGPGPGPTADA). An SMB domain is found at 28–66 (QESCSMRCGALDGPCSCHPTCSGLGTCCLDFRDFCLEIL). Over 28 to 785 (QESCSMRCGA…PKCQPGRSYA (758 aa)) the chain is Extracellular. Cystine bridges form between Cys-31/Cys-35, Cys-31/Cys-44, Cys-35/Cys-62, Cys-42/Cys-44, Cys-42/Cys-55, Cys-48/Cys-54, and Cys-55/Cys-62. 2 N-linked (GlcNAc...) asparagine glycosylation sites follow: Asn-162 and Asn-177. The 149-residue stretch at 285-433 (PVAWARTQCQ…PDCPRYMQRR (149 aa)) folds into the AMOP domain. Residues 445–639 (RLASAFGDPH…NWTVHNASSL (195 aa)) form the VWFD domain. An N-linked (GlcNAc...) asparagine glycan is attached at Asn-522. In terms of domain architecture, Sushi spans 723–780 (VSCGWLAPPPNGQKEGNRYLAGSTIYFHCDNGYSLAGAETSTCQADGTWSSPTPKCQP). Intrachain disulfides connect Cys-725-Cys-765 and Cys-751-Cys-778. The helical transmembrane segment at 786–806 (VLLGIIFGGLAVVAAVALVYV) threads the bilayer. The Cytoplasmic portion of the chain corresponds to 807 to 822 (LLRRRKGNTHVWGAQP).

In terms of assembly, interacts with LGALS1; leads to an increased amount of LGALS1 on the cell surface. Interacts with GPR15LG; the interaction is direct. As to expression, highly expressed in breast cancer, but shows a restricted expression pattern in normal tissues such as adipose, adrenal gland, kidney, lung, mammary gland, placenta, thyroid, trachea, and uterus. Also expressed in colon; down-regulated in colon cancer tissues.

The protein localises to the cell membrane. In terms of biological role, may be a cytokine receptor for GPR15LG. May be a tumor suppressor; together with GPR15LG has a growth inhibitory effect on colon cancer cells which includes G1 cell cycle arrest. May play a role in breast tumorigenesis. This is Sushi domain-containing protein 2 (SUSD2) from Homo sapiens (Human).